Reading from the N-terminus, the 101-residue chain is Small ribosomal subunit protein bS18c (101 aa).

Belongs to the bacterial ribosomal protein bS18 family. Component of the chloroplast small ribosomal subunit (SSU). Mature 70S chloroplast ribosomes of higher plants consist of a small (30S) and a large (50S) subunit. The 30S small subunit contains 1 molecule of ribosomal RNA (16S rRNA) and 24 different proteins. The 50S large subunit contains 3 rRNA molecules (23S, 5S and 4.5S rRNA) and 33 different proteins.

It is found in the plastid. The protein resides in the chloroplast. Component of the chloroplast ribosome (chloro-ribosome), a dedicated translation machinery responsible for the synthesis of chloroplast genome-encoded proteins, including proteins of the transcription and translation machinery and components of the photosynthetic apparatus. The sequence is that of Small ribosomal subunit protein bS18c (RPS18) from Spinacia oleracea (Spinach).